The primary structure comprises 309 residues: Chitin synthase export chaperone (309 aa).

The next 7 helical transmembrane spans lie at 51–71 (FQIG…IIIF), 86–106 (LFFF…DCGV), 114–134 (YAYF…CILY), 156–176 (VICF…FKSW), 194–214 (LINA…VVFA), 218–238 (YWPL…QVLT), and 251–271 (HYID…MMIY).

The protein belongs to the CHS7 family. Interacts with CHS3.

The protein localises to the endoplasmic reticulum membrane. Its function is as follows. Chaperone required for the export of the chitin synthase CHS3 from the endoplasmic reticulum. This chain is Chitin synthase export chaperone (CHS7), found in Debaryomyces hansenii (strain ATCC 36239 / CBS 767 / BCRC 21394 / JCM 1990 / NBRC 0083 / IGC 2968) (Yeast).